The sequence spans 96 residues: C-C motif chemokine 20 (96 aa).

Positions 1-26 (MCCTKSLLLAALMSVLLLHLCGESEA) are cleaved as a signal peptide. 2 disulfide bridges follow: cysteine 32–cysteine 58 and cysteine 33–cysteine 74.

This sequence belongs to the intercrine beta (chemokine CC) family. In terms of processing, C-terminal processed forms which lack 1, 3 or 6 amino acids are produced by proteolytic cleavage after secretion from peripheral blood monocytes. In terms of tissue distribution, expressed in the seminal plasma, endometrial fluid and follicular fluid (at protein level). Expressed predominantly in the liver, lymph nodes, appendix, peripheral blood lymphocytes, and fetal lung. Low levels seen in thymus, prostate, testis, small intestine and colon.

The protein localises to the secreted. Its function is as follows. Acts as a ligand for C-C chemokine receptor CCR6. Signals through binding and activation of CCR6 and induces a strong chemotactic response and mobilization of intracellular calcium ions. The ligand-receptor pair CCL20-CCR6 is responsible for the chemotaxis of dendritic cells (DC), effector/memory T-cells and B-cells and plays an important role at skin and mucosal surfaces under homeostatic and inflammatory conditions, as well as in pathology, including cancer and various autoimmune diseases. CCL20 acts as a chemotactic factor that attracts lymphocytes and, slightly, neutrophils, but not monocytes. Involved in the recruitment of both the pro-inflammatory IL17 producing helper T-cells (Th17) and the regulatory T-cells (Treg) to sites of inflammation. Required for optimal migration of thymic natural regulatory T cells (nTregs) and DN1 early thymocyte progenitor cells. C-terminal processed forms have been shown to be equally chemotactically active for leukocytes. Positively regulates sperm motility and chemotaxis via its binding to CCR6 which triggers Ca2+ mobilization in the sperm which is important for its motility. Inhibits proliferation of myeloid progenitors in colony formation assays. May be involved in formation and function of the mucosal lymphoid tissues by attracting lymphocytes and dendritic cells towards epithelial cells. Possesses antibacterial activity towards E.coli ATCC 25922 and S.aureus ATCC 29213. The polypeptide is C-C motif chemokine 20 (CCL20) (Homo sapiens (Human)).